We begin with the raw amino-acid sequence, 317 residues long: DNA-directed RNA polymerase III subunit RPC6 (317 aa).

It belongs to the eukaryotic RPC34/RPC39 RNA polymerase subunit family. As to quaternary structure, component of the RNA polymerase III (Pol III) complex consisting of 17 subunits. Interacts with BRF1/TDS4.

Its subcellular location is the nucleus. Functionally, DNA-dependent RNA polymerase catalyzes the transcription of DNA into RNA using the four ribonucleoside triphosphates as substrates. Specific peripheric component of RNA polymerase III which synthesizes small RNAs, such as 5S rRNA and tRNAs. Involved in recruitment of Pol III to the preinitiation complex. Involved in the configuration of an initiation-competent form of RNA polymerase. The sequence is that of DNA-directed RNA polymerase III subunit RPC6 (RPC34) from Saccharomyces cerevisiae (strain ATCC 204508 / S288c) (Baker's yeast).